The sequence spans 133 residues: Small ribosomal subunit protein uS11 (133 aa).

It belongs to the universal ribosomal protein uS11 family. In terms of assembly, part of the 30S ribosomal subunit. Interacts with proteins S7 and S18. Binds to IF-3.

Its function is as follows. Located on the platform of the 30S subunit, it bridges several disparate RNA helices of the 16S rRNA. Forms part of the Shine-Dalgarno cleft in the 70S ribosome. The polypeptide is Small ribosomal subunit protein uS11 (Cupriavidus metallidurans (strain ATCC 43123 / DSM 2839 / NBRC 102507 / CH34) (Ralstonia metallidurans)).